A 316-amino-acid chain; its full sequence is Acetylglutamate kinase (316 aa).

Substrate-binding positions include 76–77 (GG), R98, and N207.

This sequence belongs to the acetylglutamate kinase family. ArgB subfamily.

Its subcellular location is the cytoplasm. The enzyme catalyses N-acetyl-L-glutamate + ATP = N-acetyl-L-glutamyl 5-phosphate + ADP. It functions in the pathway amino-acid biosynthesis; L-arginine biosynthesis; N(2)-acetyl-L-ornithine from L-glutamate: step 2/4. In terms of biological role, catalyzes the ATP-dependent phosphorylation of N-acetyl-L-glutamate. The protein is Acetylglutamate kinase of Paenarthrobacter aurescens (strain TC1).